The following is a 214-amino-acid chain: Adenylate kinase (214 aa).

Position 10–15 (10–15 (GAGKGT)) interacts with ATP. The segment at 30 to 59 (STGDMLRSAVKAGTELGLKAKALMDHGKLV) is NMP. AMP contacts are provided by residues T31, R36, 57-59 (KLV), 85-88 (GFPR), and Q92. Residues 122–159 (GRRIHAPSGRVYHIKFNPPVVENKDDVTGEELTVRKDD) form an LID region. ATP-binding positions include R123 and 132 to 133 (VY). 2 residues coordinate AMP: R156 and R167. R200 provides a ligand contact to ATP.

It belongs to the adenylate kinase family. As to quaternary structure, monomer.

It is found in the cytoplasm. It catalyses the reaction AMP + ATP = 2 ADP. The protein operates within purine metabolism; AMP biosynthesis via salvage pathway; AMP from ADP: step 1/1. In terms of biological role, catalyzes the reversible transfer of the terminal phosphate group between ATP and AMP. Plays an important role in cellular energy homeostasis and in adenine nucleotide metabolism. The chain is Adenylate kinase from Photorhabdus laumondii subsp. laumondii (strain DSM 15139 / CIP 105565 / TT01) (Photorhabdus luminescens subsp. laumondii).